Consider the following 1063-residue polypeptide: Unconventional myosin-Ic (1063 aa).

M1 carries the N-acetylmethionine modification. T10 is subject to Phosphoserine. Positions 47-731 constitute a Myosin motor domain; it reads GVQDFVLLEN…TLFATEDSLE (685 aa). Residues N88, Y96, 139 to 148, and 192 to 196 contribute to the ATP site; these read SGESGAGKTE and NDNSS. An N6-methyllysine modification is found at K383. Residue S408 is modified to Phosphoserine. K486 carries the N6-acetyllysine modification. S536 is modified (phosphoserine). The tract at residues 608–630 is actin-binding; sequence LLQLVEILRSKEPAYIRCIKPND. IQ domains lie at 734 to 757 and 758 to 786; these read RQSL…FLRV and KRSA…AAQT. 2 positions are modified to phosphoserine: S864 and S1041. A TH1 domain is found at 885 to 1059; that stretch reads KDNYPQSVPR…NGHLAVVAPR (175 aa).

This sequence belongs to the TRAFAC class myosin-kinesin ATPase superfamily. Myosin family. Interacts (via its IQ motifs) with CABP1 and CIB1; the interaction with CABP1 and CIB1 is calcium-dependent. Interacts (via tail domain) with PLEKHB1 (via PH domain); the interaction is not affected by the presence or absence of calcium and CALM. Interacts with POLR1A. Interacts with POLR2A. Component of the B-WICH complex, at least composed of SMARCA5/SNF2H, BAZ1B/WSTF, SF3B1, DEK, MYO1C, ERCC6, MYBBP1A and DDX21. Interacts (via its IQ motifs) with CALM; this precludes interaction with YWHAB. Interacts with YWHAB; this precludes interaction with CALM. Interacts with RPS6. Interacts with actin. Interacts with LLPH. Interacts with GLUT4. Interacts (via its IQ motifs) with SH3BGRL3; the interaction is dependent on calcium and takes place at membrane ruffles. Isoform 2 contains a N-acetylmethionine at position 1. As to expression, isoform 3 is expressed in small intestine, pancreas, brain, kidney, skin, heart muscle, testis, striated muscle, spleen, liver and lung (at protein level). Expressed in brain, testis, adrenal glands, thymus, spleen, kidney, lung, heart, cochlea and vestibule. Expressed in sensory hair cells of the inner ear. Expressed in adipocytes.

Its subcellular location is the cytoplasm. The protein localises to the nucleus. It localises to the cell cortex. The protein resides in the cell projection. It is found in the stereocilium membrane. Its subcellular location is the cytoplasmic vesicle. The protein localises to the ruffle membrane. It localises to the nucleolus. The protein resides in the nucleoplasm. In terms of biological role, myosins are actin-based motor molecules with ATPase activity. Unconventional myosins serve in intracellular movements. Their highly divergent tails bind to membranous compartments, which then are moved relative to actin filaments. Involved in glucose transporter recycling in response to insulin by regulating movement of intracellular GLUT4-containing vesicles to the plasma membrane. Component of the hair cell's (the sensory cells of the inner ear) adaptation-motor complex. Acts as a mediator of adaptation of mechanoelectrical transduction in stereocilia of vestibular hair cells. Binds phosphoinositides and links the actin cytoskeleton to cellular membranes. Functionally, involved in regulation of transcription. Associated with transcriptional active ribosomal genes. Appears to cooperate with the WICH chromatin-remodeling complex to facilitate transcription. Necessary for the formation of the first phosphodiester bond during transcription initiation. This is Unconventional myosin-Ic (Myo1c) from Mus musculus (Mouse).